The primary structure comprises 179 residues: Transthyretin-like protein 46 (179 aa).

The signal sequence occupies residues 1 to 17 (MNKLFVLLIALLGLTAA). The interval 144 to 179 (RRGGFNADYMDPDNSEKDQSKSSEESEDKEKTVETF) is disordered. A compositionally biased stretch (basic and acidic residues) spans 157-179 (NSEKDQSKSSEESEDKEKTVETF).

The protein belongs to the nematode transthyretin-like family.

The protein resides in the secreted. The chain is Transthyretin-like protein 46 (ttr-46) from Caenorhabditis elegans.